The chain runs to 418 residues: MMNIELAPSGEEFTLSPTVIKVIGAGGGGSNAVNRMMSCGLQCVEFIAANTDVQALSYSTAPKKLAIGTKVTRGLGAGGDPEIGEKAAMEDAEAIASALQGANMVFITAGMGGGTGTGAAPVIAKIARELGALTVAVVTKPFRFEGRAKMMLAERGIEKLRTHSDTVIVIPNQNLLSVVDKRCPIKETYLVADDLLRKSVQSISDLITLPGEVNLDFMDVKNTMEGQGYALIGVGEGEGENRAVDAATAAINNPLLEETRIEGATRLLVAVRGSENLSMGEVDGVMSVVAKTIDPDAIIIHGTSIDASMQDRVRVTVIATGVPQASISIAGDTHSSQKIKTSSYGAVSTGVYISSDEWNRAKSSKQPNLPGLATRNSAVQETRMEKNGVKGHTFGVPLPSVNEDLDEPTFLRNRNKGL.

Residues 27–31 (GGGSN), 114–116 (GTG), Glu145, Lys149, and Asp193 contribute to the GTP site. A disordered region spans residues 386 to 418 (KNGVKGHTFGVPLPSVNEDLDEPTFLRNRNKGL).

This sequence belongs to the FtsZ family. As to quaternary structure, homodimer. Polymerizes to form a dynamic ring structure in a strictly GTP-dependent manner. Interacts directly with several other division proteins.

The protein resides in the cytoplasm. Functionally, essential cell division protein that forms a contractile ring structure (Z ring) at the future cell division site. The regulation of the ring assembly controls the timing and the location of cell division. One of the functions of the FtsZ ring is to recruit other cell division proteins to the septum to produce a new cell wall between the dividing cells. Binds GTP and shows GTPase activity. This chain is Cell division protein FtsZ, found in Treponema pallidum (strain Nichols).